The primary structure comprises 153 residues: uncharacterized protein (153 aa).

The interval 16 to 40 is disordered; sequence DEQTPLLNNDGIQRTPPSAEADMSL. The segment covering 20–31 has biased composition (polar residues); sequence PLLNNDGIQRTP.

This is an uncharacterized protein from Schizosaccharomyces pombe (strain 972 / ATCC 24843) (Fission yeast).